The chain runs to 244 residues: uncharacterized protein (244 aa).

It belongs to the MtxX family.

This is an uncharacterized protein from Methanocaldococcus jannaschii (strain ATCC 43067 / DSM 2661 / JAL-1 / JCM 10045 / NBRC 100440) (Methanococcus jannaschii).